The following is a 666-amino-acid chain: ATP-dependent RNA helicase MSS116, mitochondrial (666 aa).

The transit peptide at 1 to 22 directs the protein to the mitochondrion; sequence MLRHCSLGLVTTQISAIAPLRL. Residues 38–60 show a composition bias toward basic and acidic residues; the sequence is RDRRSSRSREDKPYNSRTRRFDD. The tract at residues 38 to 131 is disordered; that stretch reads RDRRSSRSRE…KSYSKGGNTS (94 aa). A compositionally biased stretch (polar residues) spans 120–131; that stretch reads NTKSYSKGGNTS. The Q motif motif lies at 159 to 187; the sequence is SLLEKNVISRDLYDSISRMGFEQLTPVQQ. Residues 192-379 enclose the Helicase ATP-binding domain; it reads PIITNSDSDI…NDIMNKEECL (188 aa). 205 to 212 is an ATP binding site; the sequence is AKTGTGKT. The short motif at 320–323 is the DEAD box element; that stretch reads DEAD. Positions 408-560 constitute a Helicase C-terminal domain; that stretch reads NLYAAIEHIR…NIRKFEAQPH (153 aa).

It belongs to the DEAD box helicase family. DDX18/HAS1 subfamily.

Its subcellular location is the mitochondrion matrix. The enzyme catalyses ATP + H2O = ADP + phosphate + H(+). Its function is as follows. ATP-dependent RNA helicase required for mitochondrial splicing of group I and II introns. Also required for efficient mitochondrial translation. The chain is ATP-dependent RNA helicase MSS116, mitochondrial (MSS116) from Candida glabrata (strain ATCC 2001 / BCRC 20586 / JCM 3761 / NBRC 0622 / NRRL Y-65 / CBS 138) (Yeast).